The following is a 331-amino-acid chain: Aromatic 2-oxoacid reductase (331 aa).

Residues 154-155 (RI), aspartate 175, 205-206 (AP), asparagine 211, 232-234 (AAR), and aspartate 258 contribute to the NAD(+) site. Arginine 234 is an active-site residue. Glutamate 263 is an active-site residue. The Proton donor role is filled by histidine 295.

Belongs to the D-isomer specific 2-hydroxyacid dehydrogenase family.

The catalysed reaction is (R)-3-phenyllactate + NAD(+) = 3-phenylpyruvate + NADH + H(+). It carries out the reaction (2R)-2-hydroxy-3-(4-hydroxyphenyl)propanoate + NAD(+) = 3-(4-hydroxyphenyl)pyruvate + NADH + H(+). It catalyses the reaction 3-(indol-3-yl)lactate + NAD(+) = indole-3-pyruvate + NADH + H(+). The protein operates within amino-acid degradation. Essential for the reductive metabolism of L-phenylalanine, L-tyrosine and L-tryptophan. Catalyzes the conversion of phenylpyruvic acid to phenyllactic acid, 4-hydroxy-phenylpyruvic acid to 4-hydroxy-phenyllactic acid, and indolepyruvic acid to indolelactic acid. The protein is Aromatic 2-oxoacid reductase of Clostridium sporogenes (strain ATCC 7955 / DSM 767 / NBRC 16411 / NCIMB 8053 / NCTC 8594 / PA 3679).